Here is a 286-residue protein sequence, read N- to C-terminus: Pyridoxal kinase PdxY (286 aa).

Substrate-binding positions include serine 9 and 44-45 (TQ). ATP-binding positions include aspartate 111, alanine 143, glutamate 148, lysine 181, and 208–211 (RPLV). Aspartate 223 is a binding site for substrate.

It belongs to the pyridoxine kinase family. PdxY subfamily. In terms of assembly, homodimer. Requires Mg(2+) as cofactor.

The enzyme catalyses pyridoxal + ATP = pyridoxal 5'-phosphate + ADP + H(+). Its pathway is cofactor metabolism; pyridoxal 5'-phosphate salvage; pyridoxal 5'-phosphate from pyridoxal: step 1/1. In terms of biological role, pyridoxal kinase involved in the salvage pathway of pyridoxal 5'-phosphate (PLP). Catalyzes the phosphorylation of pyridoxal to PLP. The protein is Pyridoxal kinase PdxY of Salmonella paratyphi A (strain ATCC 9150 / SARB42).